The sequence spans 45 residues: Large ribosomal subunit protein bL34 (45 aa).

The segment at 1–45 (MTKRTLGGTSRKRKRVSGFRVRMRSHTGRRVIRTRRKRGRSRLAV) is disordered. The segment covering 10 to 45 (SRKRKRVSGFRVRMRSHTGRRVIRTRRKRGRSRLAV) has biased composition (basic residues).

Belongs to the bacterial ribosomal protein bL34 family.

This Parasynechococcus marenigrum (strain WH8102) protein is Large ribosomal subunit protein bL34.